The sequence spans 569 residues: Phenylalanine ammonia-lyase (569 aa).

Tyr78 (proton donor/acceptor) is an active-site residue. The segment at residues 167–169 (ASG) is a cross-link (5-imidazolinone (Ala-Gly)). Residue Ser168 is modified to 2,3-didehydroalanine (Ser). 7 residues coordinate (E)-cinnamate: Asn223, Gln311, Arg317, Asn347, Lys419, Glu448, and Asn451.

It belongs to the PAL/histidase family. In terms of assembly, homotetramer. In terms of processing, contains an active site 4-methylidene-imidazol-5-one (MIO), which is formed autocatalytically by cyclization and dehydration of residues Ala-Ser-Gly.

The protein resides in the cytoplasm. The catalysed reaction is L-phenylalanine = (E)-cinnamate + NH4(+). It participates in phenylpropanoid metabolism; trans-cinnamate biosynthesis; trans-cinnamate from L-phenylalanine: step 1/1. Its function is as follows. Catalyzes the non-oxidative deamination of L-phenylalanine to form trans-cinnamic acid, the first step in the phenylpropanoid pathway. The chain is Phenylalanine ammonia-lyase from Nostoc punctiforme (strain ATCC 29133 / PCC 73102).